A 192-amino-acid chain; its full sequence is dCTP deaminase, dUMP-forming (192 aa).

DCTP-binding positions include 101–106 (KSSLGR), D119, 127–129 (TLE), Q148, Y162, and Q174. E129 serves as the catalytic Proton donor/acceptor. Residues 169–192 (SRYQGQRGPTPSRSWQSWRTWPTR) form a disordered region. The span at 171 to 192 (YQGQRGPTPSRSWQSWRTWPTR) shows a compositional bias: polar residues.

The protein belongs to the dCTP deaminase family. Homotrimer.

The catalysed reaction is dCTP + 2 H2O = dUMP + NH4(+) + diphosphate. It participates in pyrimidine metabolism; dUMP biosynthesis; dUMP from dCTP: step 1/1. Bifunctional enzyme that catalyzes both the deamination of dCTP to dUTP and the hydrolysis of dUTP to dUMP without releasing the toxic dUTP intermediate. This chain is dCTP deaminase, dUMP-forming, found in Salinispora tropica (strain ATCC BAA-916 / DSM 44818 / JCM 13857 / NBRC 105044 / CNB-440).